We begin with the raw amino-acid sequence, 474 residues long: Aspartate ammonia-lyase (474 aa).

The L-aspartate site is built by T105, S144, T145, N146, and T191. The segment at 322-331 is SS loop; the sequence is GSSIMPGKVN. S323 serves as the catalytic Proton acceptor. The L-aspartate site is built by S324 and K329.

This sequence belongs to the class-II fumarase/aspartase family. Aspartase subfamily. As to quaternary structure, homotetramer.

The enzyme catalyses L-aspartate = fumarate + NH4(+). It catalyses the reaction L-phenylalanine = (E)-cinnamate + NH4(+). Does not require any divalent metal ion for activation of catalysis, but the activity is slightly increased in the presence of Mg(2+), Mn(2+), Ca(2+) or Co(2+). In terms of biological role, catalyzes the reversible conversion of L-aspartate to fumarate and ammonia. Can also utilize L-phenylalanine to form cinnamic acid. Exhibits the highest specific activity towards L-phenylalanine, but catalytic efficiency is 3-fold higher with L-aspartate. In Pseudomonas aeruginosa (strain ATCC 15692 / DSM 22644 / CIP 104116 / JCM 14847 / LMG 12228 / 1C / PRS 101 / PAO1), this protein is Aspartate ammonia-lyase.